The sequence spans 461 residues: Cysteine--tRNA ligase (461 aa).

Zn(2+) is bound at residue Cys28. The 'HIGH' region motif lies at 30 to 40; sequence ITVYDLCHIGH. Zn(2+) is bound by residues Cys209, His234, and Glu238. Residues 266–270 carry the 'KMSKS' region motif; sequence KMSKS. Position 269 (Lys269) interacts with ATP.

The protein belongs to the class-I aminoacyl-tRNA synthetase family. In terms of assembly, monomer. Zn(2+) serves as cofactor.

It localises to the cytoplasm. It catalyses the reaction tRNA(Cys) + L-cysteine + ATP = L-cysteinyl-tRNA(Cys) + AMP + diphosphate. This Escherichia coli O157:H7 protein is Cysteine--tRNA ligase.